The primary structure comprises 205 residues: Polyamine-modulated factor 1 (205 aa).

The disordered stretch occupies residues 1 to 30 (MAEASSANLGSGCEEKRHEGSSSESVPPGT). Residues 141 to 193 (FLQQRDTLRRHVQKQEAENQQLADAVLAGRRQVEELQLQVQAQQQAWQALHRE) are a coiled coil.

As to quaternary structure, component of the MIS12 complex composed of MIS12, DSN1, NSL1 and PMF1. Interacts with COPS7A. Interacts via its coiled-coil domain with the leucine-zipper domain of NFE2L2. The interaction with NFE2L2 is required for the transcriptional regulation of SSAT. Highest levels of expression in heart and skeletal muscle, with significant levels expressed in kidney and liver.

Its subcellular location is the nucleus. It localises to the chromosome. The protein resides in the centromere. The protein localises to the kinetochore. Its function is as follows. Part of the MIS12 complex which is required for normal chromosome alignment and segregation and kinetochore formation during mitosis. May act as a cotranscription partner of NFE2L2 involved in regulation of polyamine-induced transcription of SSAT. The protein is Polyamine-modulated factor 1 of Homo sapiens (Human).